The following is a 444-amino-acid chain: Glutamate-1-semialdehyde 2,1-aminomutase (444 aa).

The residue at position 267 (Lys-267) is an N6-(pyridoxal phosphate)lysine.

This sequence belongs to the class-III pyridoxal-phosphate-dependent aminotransferase family. HemL subfamily. Homodimer. Pyridoxal 5'-phosphate is required as a cofactor.

It is found in the cytoplasm. It catalyses the reaction (S)-4-amino-5-oxopentanoate = 5-aminolevulinate. It functions in the pathway porphyrin-containing compound metabolism; protoporphyrin-IX biosynthesis; 5-aminolevulinate from L-glutamyl-tRNA(Glu): step 2/2. In Xylella fastidiosa (strain M12), this protein is Glutamate-1-semialdehyde 2,1-aminomutase.